Here is a 156-residue protein sequence, read N- to C-terminus: Small ribosomal subunit protein uS7 (156 aa).

This sequence belongs to the universal ribosomal protein uS7 family. Part of the 30S ribosomal subunit. Contacts proteins S9 and S11.

Its function is as follows. One of the primary rRNA binding proteins, it binds directly to 16S rRNA where it nucleates assembly of the head domain of the 30S subunit. Is located at the subunit interface close to the decoding center, probably blocks exit of the E-site tRNA. This chain is Small ribosomal subunit protein uS7, found in Campylobacter jejuni subsp. jejuni serotype O:6 (strain 81116 / NCTC 11828).